A 331-amino-acid polypeptide reads, in one-letter code: Cytochrome bo(3) ubiquinol oxidase subunit 2 (331 aa).

The signal sequence occupies residues Met1–Gly23. Cys24 carries the N-palmitoyl cysteine lipid modification. Cys24 is lipidated: S-diacylglycerol cysteine. At Cys24 to Thr41 the chain is on the periplasmic side. The helical transmembrane segment at Leu42 to Leu62 threads the bilayer. Residues Ala63–Arg86 are Cytoplasmic-facing. Residues Ile87–Trp107 traverse the membrane as a helical segment. Topologically, residues Glu108–Glu331 are periplasmic.

Belongs to the cytochrome c oxidase subunit 2 family. Heterooctamer of two A chains, two B chains, two C chains and two D chains.

The protein localises to the cell inner membrane. Its function is as follows. Cytochrome bo(3) ubiquinol terminal oxidase is the component of the aerobic respiratory chain of E.coli that predominates when cells are grown at high aeration. Has proton pump activity across the membrane in addition to electron transfer, pumping 2 protons/electron. The chain is Cytochrome bo(3) ubiquinol oxidase subunit 2 (cyoA) from Pseudomonas aeruginosa (strain ATCC 15692 / DSM 22644 / CIP 104116 / JCM 14847 / LMG 12228 / 1C / PRS 101 / PAO1).